Reading from the N-terminus, the 236-residue chain is F-box and leucine-rich protein 22 (236 aa).

The region spanning 1–46 (MHITQLNRECLLCLFSFLDKDSRRSLSRTCSQLRDVFEDPTLWPLL) is the F-box domain. 6 LRR repeats span residues 15–40 (FSFL…FEDP), 43–72 (WPLL…SICW), 98–123 (HESL…TLSG), 124–149 (CGHV…RLEN), 150–175 (CARV…HVDF), and 176–201 (CRNV…AERS).

Directly interacts with SKP1 and CUL1. As to expression, enriched in cardiac muscle (at protein level).

It is found in the cytoplasm. Its subcellular location is the myofibril. The protein localises to the sarcomere. The protein resides in the z line. It functions in the pathway protein modification; protein ubiquitination. Substrate-recognition component of the SCF (SKP1-CUL1-F-box protein)-type E3 ubiquitin ligase complex. Promotes ubiquitination of sarcomeric proteins alpha-actinin-2 (ACTN2) and filamin-C (FLNC). The sequence is that of F-box and leucine-rich protein 22 (Fbxl22) from Mus musculus (Mouse).